Here is a 524-residue protein sequence, read N- to C-terminus: Zinc finger protein GLIS2 (524 aa).

An interaction with CTNND1 region spans residues A35–K174. Disordered stretches follow at residues E39–N62 and S84–A114. The segment at G71–G137 is transcription activation. Residues S84–P100 are compositionally biased toward low complexity. The tract at residues S148–R171 is transcription repression. A C2H2-type 1 zinc finger spans residues L168–H193. The segment at Y202 to H229 adopts a C2H2-type 2; atypical zinc-finger fold. 3 consecutive C2H2-type zinc fingers follow at residues H235–H257, Y263–H287, and Y293–H317. A disordered region spans residues G439–L480. A compositionally biased stretch (basic and acidic residues) spans E459–E469.

It belongs to the GLI C2H2-type zinc-finger protein family. In terms of assembly, interacts with CTBP1 and HDAC3. Interacts with CTNNB1. Interacts with SUFU. Interacts with CTNND1. Post-translationally, C-terminus cleavage is induced by interaction with CTNND1 and enhanced by Src tyrosine kinase. As to expression, expressed at high levels in kidney and at low levels in heart, lung and placenta. Expressed in colon.

It localises to the nucleus speckle. It is found in the cytoplasm. Its function is as follows. Can act either as a transcriptional repressor or as a transcriptional activator, depending on the cell context. Acts as a repressor of the Hedgehog signaling pathway. Represses the Hedgehog-dependent expression of Wnt4. Necessary to maintain the differentiated epithelial phenotype in renal cells through the inhibition of SNAI1, which itself induces the epithelial-to-mesenchymal transition. Represses transcriptional activation mediated by CTNNB1 in the Wnt signaling pathway. May act by recruiting the corepressors CTBP1 and HDAC3. May be involved in neuron differentiation. The sequence is that of Zinc finger protein GLIS2 (GLIS2) from Homo sapiens (Human).